The chain runs to 89 residues: Large ribosomal subunit protein uL29c (89 aa).

The protein belongs to the universal ribosomal protein uL29 family.

Its subcellular location is the plastid. The protein resides in the chloroplast. The protein is Large ribosomal subunit protein uL29c (rpl29) of Trieres chinensis (Marine centric diatom).